A 545-amino-acid polypeptide reads, in one-letter code: Signal peptide peptidase-like 4 (545 aa).

Residues 1 to 25 (MGTSSPEMAAALLLVMAALAGVAAG) form the signal peptide. At 26–193 (GDIVHQDDEA…PDRPLVDTAE (168 aa)) the chain is on the lumenal side. N-linked (GlcNAc...) asparagine glycans are attached at residues asparagine 81 and asparagine 147. Residues 90-170 (PIDCCDPPTQ…PKDAGNDLQK (81 aa)) enclose the PA domain. The helical transmembrane segment at 194-214 (VFLWLMAVGTILCASYWSAWS) threads the bilayer. Topologically, residues 215 to 246 (AREAVIEQEKLLKDGHESSLNLEAGGSSGMVD) are cytoplasmic. A helical membrane pass occupies residues 247–267 (INMTSAILFVVIASCFLIMLY). Residues 268–276 (KLMSHWFVE) lie on the Lumenal side of the membrane. The chain crosses the membrane as a helical span at residues 277 to 297 (LLVVIFCIGGVEGLQTCLVAL). Residues 298 to 317 (LSRWFKPAAESFVKVPFFGA) lie on the Cytoplasmic side of the membrane. The chain crosses the membrane as a helical span at residues 318–338 (VSYLTIAVCPFCIVFAVIWAV). Residues 339–343 (YRRMT) lie on the Lumenal side of the membrane. The helical transmembrane segment at 344–364 (YAWIGQDILGIALIVTVIQIV) threads the bilayer. Topologically, residues 365 to 373 (RIPNLKVGS) are cytoplasmic. The helical transmembrane segment at 374-394 (VLLSCSFLYDIFWVFISKMWF) threads the bilayer. Residue aspartate 383 is part of the active site. Topologically, residues 395–427 (HESVMIVVARGDKTDEDGVPMLLKIPRMFDPWG) are lumenal. A helical membrane pass occupies residues 428–448 (GFSIIGFGDILLPGLLIAFAL). The active site involves aspartate 436. Residues 449 to 460 (RYDWAAKKTLQS) lie on the Cytoplasmic side of the membrane. A helical membrane pass occupies residues 461 to 481 (GYFLWSMVAYGSGLMITYVAL). Topologically, residues 482-485 (NLMD) are lumenal. The helical transmembrane segment at 486–506 (GHGQPALLYIVPFTLGTFIAL) threads the bilayer. Residues 490-492 (PAL) carry the PAL motif. Residues 507–545 (GRKRGELRNLWTRGQPERVCTHMHMQPSPKDTNCDAVSS) lie on the Cytoplasmic side of the membrane.

This sequence belongs to the peptidase A22B family. In terms of processing, glycosylated.

It localises to the endosome membrane. Intramembrane-cleaving aspartic protease (I-CLiP) that cleaves type II membrane signal peptides in the hydrophobic plane of the membrane. The polypeptide is Signal peptide peptidase-like 4 (SPPL4) (Oryza sativa subsp. japonica (Rice)).